The chain runs to 358 residues: Ganglioside-induced differentiation-associated protein 1 (358 aa).

The region spanning 24-105 (VKLILYHWTH…YLEQTFLDER (82 aa)) is the GST N-terminal domain. Residues Lys-50, Lys-172, Lys-173, Lys-188, and Lys-190 each participate in a glycyl lysine isopeptide (Lys-Gly) (interchain with G-Cter in ubiquitin) cross-link. Residues 153–309 (PAYATTRIRS…LISAVLPTAF (157 aa)) enclose the GST C-terminal domain. At Lys-203 the chain carries N6-acetyllysine; alternate. Residue Lys-203 forms a Glycyl lysine isopeptide (Lys-Gly) (interchain with G-Cter in ubiquitin); alternate linkage. Residues Lys-206, Lys-207, and Lys-214 each participate in a glycyl lysine isopeptide (Lys-Gly) (interchain with G-Cter in ubiquitin) cross-link. Helical transmembrane passes span 292-312 (VLGH…FRVA) and 320-340 (LGTT…FMLF). A required for mitochondrial localization region spans residues 320–358 (LGTTLVVGLLAGVGYFAFMLFRKRLGSMILAFRPRPNYF).

The protein belongs to the GST superfamily. Homodimer. Post-translationally, ubiquitinated by PRKN during mitophagy, leading to its degradation and enhancement of mitophagy. Deubiquitinated by USP30. As to expression, highly expressed in whole brain and spinal cord. Predominant expression in central tissues of the nervous system not only in neurons but also in Schwann cells.

It localises to the mitochondrion outer membrane. It is found in the cytoplasm. In terms of biological role, regulates the mitochondrial network by promoting mitochondrial fission. The sequence is that of Ganglioside-induced differentiation-associated protein 1 (GDAP1) from Homo sapiens (Human).